The chain runs to 602 residues: Bifunctional lycopene cyclase/phytoene synthase (602 aa).

The interval 1-241 (MYDYAFVHLK…IVGGMAAFDQ (241 aa)) is lycopene beta-cyclase. The next 7 helical transmembrane spans lie at 6 to 26 (FVHLKFTVPAAVLLTAIAYPI), 30 to 50 (IHLIQTGFLVVVAFTAALPWD), 76 to 96 (FEELFFFVIQTYITALVYILF), 118 to 138 (VVKVTGQVVLVALSVWGWNAA), 146 to 166 (YLGLILVWACPFLLAIWTLAG), 168 to 188 (FILSLPWYATVLPMFLPTFYL), and 230 to 250 (MLIVGGMAAFDQYLAVIYAFP). The tract at residues 248–602 (AFPTLFPKVN…STLLRALYEQ (355 aa)) is phytoene synthase.

In the N-terminal section; belongs to the lycopene beta-cyclase family. This sequence in the C-terminal section; belongs to the phytoene/squalene synthase family.

It localises to the membrane. It carries out the reaction all-trans-lycopene = gamma-carotene. The catalysed reaction is gamma-carotene = all-trans-beta-carotene. The enzyme catalyses 2 (2E,6E,10E)-geranylgeranyl diphosphate = 15-cis-phytoene + 2 diphosphate. It functions in the pathway carotenoid biosynthesis; beta-carotene biosynthesis. Its pathway is carotenoid biosynthesis; phytoene biosynthesis; all-trans-phytoene from geranylgeranyl diphosphate: step 1/1. Bifunctional enzyme that catalyzes the reactions from geranylgeranyl diphosphate to phytoene (phytoene synthase) and from lycopene to beta-carotene via the intermediate gamma-carotene and from 3,4-didehydrolycopene to torulene (lycopene cyclase). Torulene is further processed to the acidic carotenoid neurosporaxanthin. The cyclase preferentially catalyzes single cyclizations at only one end of the substrate to produce monocyclic carotenoids. Neurosporaxanthin is synthesized from geranyl-geranyl pyrophosphate (GGPP) through several enzymatic activities. Phytoene synthase activity performed by the bifunctional enzyme al-2 first produces phytoene from geranyl-geranyl pyrophosphate (GGPP). The phytoene dehydrogenase al-1 then introduces 5 desaturations to lead to 3,4-didehydrolycopene via the intermediates phytofluene, zeta-carotene, neurosporene and lycopene. Al-2 cyclase activity then converts 3,4-didehydrolycopene into torulene. Al-2 can also convet lycopene into gamma-carotene which in turn is converted to beta-carotene by an additional al-2 cyclization reaction. Torulene is the substrate of the dioxidase cao-2 that breaks the molecule, removing five carbon atoms to yield beta-apo-4'-carotenal, whereas the aldehyde dehydrogenase ylo-1 mediates the last step by converting beta-apo-4'-carotenal into neurosporaxanthin. This is Bifunctional lycopene cyclase/phytoene synthase from Neurospora crassa (strain ATCC 24698 / 74-OR23-1A / CBS 708.71 / DSM 1257 / FGSC 987).